The chain runs to 406 residues: Probable sphingosine-1-phosphate phosphatase (406 aa).

Transmembrane regions (helical) follow at residues 66–86 (ILGE…CVAT) and 92–112 (LCVV…TFTL). The tract at residues 107-115 (KNTFTLPRP) is phosphatase sequence motif I. The tract at residues 133–136 (PSTH) is phosphatase sequence motif II. Histidine 136 functions as the Proton donor in the catalytic mechanism. Transmembrane regions (helical) follow at residues 138-158 (ASAF…FPTI) and 162-182 (FNIS…SVMF). A phosphatase sequence motif III region spans residues 183 to 194 (SRLYNGHHTPMD). Histidine 190 acts as the Nucleophile in catalysis. A run of 5 helical transmembrane segments spans residues 193 to 213 (MDVI…TYQL), 225 to 245 (TFLF…FFHP), 254 to 274 (AYPE…SLWL), 313 to 333 (ILIG…FFFF), and 374 to 394 (LFVY…FYYL).

Belongs to the type 2 lipid phosphate phosphatase family.

Its subcellular location is the endoplasmic reticulum membrane. In terms of biological role, has enzymatic activity against both sphingosine 1 phosphate (S1P) and dihydro-S1P. Regulates intracellular and extracellular S1P levels. This Dictyostelium discoideum (Social amoeba) protein is Probable sphingosine-1-phosphate phosphatase (sppA).